The following is a 392-amino-acid chain: Protein FAM53C (392 aa).

Residue M1 is modified to N-acetylmethionine. The tract at residues 76–120 (LHLRPPSPGSSPQEQSLSQVLSPEPPDPEKLPVPPAPPSKRHCRS) is disordered. Residues 85–97 (SSPQEQSLSQVLS) are compositionally biased toward low complexity. 2 positions are modified to phosphoserine: S122 and S162. Disordered regions lie at residues 141-167 (LWTP…PKRV) and 201-294 (DSSH…EDPR). A compositionally biased stretch (polar residues) spans 201–215 (DSSHPSAASPQSGSW). S232, S234, S255, and S273 each carry phosphoserine. Positions 241-256 (ASRFLPSARSSPASSP) are enriched in low complexity. Over residues 278-294 (LDARKAGVKRRHEEDPR) the composition is skewed to basic and acidic residues. Position 299 is a phosphoserine (S299).

The protein belongs to the FAM53 family.

This Bos taurus (Bovine) protein is Protein FAM53C.